A 377-amino-acid polypeptide reads, in one-letter code: MNHSDTLSLSLELLQQPSVTPIDHTCQTIMADRLAKVGFHIEPMRFGDVDNLWARRGTEGPVFCFAGHTDVVPTGRLDAWNSDPFAPEIRDGKLYGRGSADMKTALAAMVVASERFVAKHPNHKGSIAFLITSDEEGPAVNGTVKVIETLEKRNEKITWCLVGEPSSTHKLGDIVKNGRRGSLNAVLKVQGKQGHVAYPHLARNPIHEASPALAELCQTVWDNGNEYFPATSFQISNIHAGTGATNVIPGTLEVTFNFRYSTEVTAEQLKQRVHEILDKHGLQYEIVWNLSGLPFLTPVGELVNAAQTAILNVTGTETELSTSGGTSDGRFIAPTGAQVLELGVLNATIHQINEHVDVHDLDPLTDIYEQILENLLA.

His-68 contributes to the Zn(2+) binding site. Residue Asp-70 is part of the active site. Asp-101 is a Zn(2+) binding site. The active-site Proton acceptor is the Glu-135. The Zn(2+) site is built by Glu-136, Glu-164, and His-350.

Belongs to the peptidase M20A family. DapE subfamily. Homodimer. It depends on Zn(2+) as a cofactor. Requires Co(2+) as cofactor.

The catalysed reaction is N-succinyl-(2S,6S)-2,6-diaminopimelate + H2O = (2S,6S)-2,6-diaminopimelate + succinate. Its pathway is amino-acid biosynthesis; L-lysine biosynthesis via DAP pathway; LL-2,6-diaminopimelate from (S)-tetrahydrodipicolinate (succinylase route): step 3/3. Functionally, catalyzes the hydrolysis of N-succinyl-L,L-diaminopimelic acid (SDAP), forming succinate and LL-2,6-diaminopimelate (DAP), an intermediate involved in the bacterial biosynthesis of lysine and meso-diaminopimelic acid, an essential component of bacterial cell walls. The polypeptide is Succinyl-diaminopimelate desuccinylase (Acinetobacter baumannii (strain SDF)).